Here is a 298-residue protein sequence, read N- to C-terminus: Nucleotide-binding protein GK3066 (298 aa).

ATP is bound at residue Gly17–Thr24. Position 68 to 71 (Asp68 to Ser71) interacts with GTP.

It belongs to the RapZ-like family.

Functionally, displays ATPase and GTPase activities. In Geobacillus kaustophilus (strain HTA426), this protein is Nucleotide-binding protein GK3066.